The primary structure comprises 76 residues: MAKKDVVVMQGYIIEALPNANFKVKLDNGHEILAHISGRMRKNFIKILPGDRVTVEVSVYDLNKGRIVKREKVNKD.

In terms of domain architecture, S1-like spans methionine 1 to lysine 72.

It belongs to the IF-1 family. As to quaternary structure, component of the 30S ribosomal translation pre-initiation complex which assembles on the 30S ribosome in the order IF-2 and IF-3, IF-1 and N-formylmethionyl-tRNA(fMet); mRNA recruitment can occur at any time during PIC assembly.

It is found in the cytoplasm. Its function is as follows. One of the essential components for the initiation of protein synthesis. Stabilizes the binding of IF-2 and IF-3 on the 30S subunit to which N-formylmethionyl-tRNA(fMet) subsequently binds. Helps modulate mRNA selection, yielding the 30S pre-initiation complex (PIC). Upon addition of the 50S ribosomal subunit IF-1, IF-2 and IF-3 are released leaving the mature 70S translation initiation complex. The protein is Translation initiation factor IF-1 of Petrotoga mobilis (strain DSM 10674 / SJ95).